Here is a 100-residue protein sequence, read N- to C-terminus: Large ribosomal subunit protein eL21 (100 aa).

Residues 1-21 (MVKRTHGYRYKSRKLLRKKPR) show a composition bias toward basic residues. A disordered region spans residues 1-22 (MVKRTHGYRYKSRKLLRKKPRE).

It belongs to the eukaryotic ribosomal protein eL21 family.

This Pyrobaculum neutrophilum (strain DSM 2338 / JCM 9278 / NBRC 100436 / V24Sta) (Thermoproteus neutrophilus) protein is Large ribosomal subunit protein eL21.